We begin with the raw amino-acid sequence, 506 residues long: UPF0371 protein FN1121 (506 aa).

Belongs to the UPF0371 family.

This Fusobacterium nucleatum subsp. nucleatum (strain ATCC 25586 / DSM 15643 / BCRC 10681 / CIP 101130 / JCM 8532 / KCTC 2640 / LMG 13131 / VPI 4355) protein is UPF0371 protein FN1121.